Here is a 796-residue protein sequence, read N- to C-terminus: Inactive dipeptidyl peptidase 10 (796 aa).

Residues 1-34 (MNQTASVSHHIKCQPSKTIKELGSNSPPQRNWKG) are Cytoplasmic-facing. The interval 1-55 (MNQTASVSHHIKCQPSKTIKELGSNSPPQRNWKGIAIALLVILVVCSLITMSVIL) is mediates effects on KCND2. The helical; Signal-anchor for type II membrane protein transmembrane segment at 35-55 (IAIALLVILVVCSLITMSVIL) threads the bilayer. The Extracellular segment spans residues 56-796 (LTPDELTNSS…VLPQEPEEDE (741 aa)). 4 N-linked (GlcNAc...) asparagine glycosylation sites follow: asparagine 63, asparagine 90, asparagine 111, and asparagine 119. 2 positions are modified to phosphotyrosine: tyrosine 138 and tyrosine 143. N-linked (GlcNAc...) asparagine glycosylation is found at asparagine 257, asparagine 342, and asparagine 748.

It belongs to the peptidase S9B family. DPPIV subfamily. May form oligomers. Interacts with KCND1. Interacts with KCND2. Identified in a complex with KCND2 and KCNIP3. Post-translationally, N-glycosylation is important for cell surface expression, specially at Asn-257, which is crucial. Detected in brain cortex, hippocampus, thalamus and cerebellum Purkinje cells (at protein level).

The protein resides in the cell membrane. Promotes cell surface expression of the potassium channel KCND2. Modulates the activity and gating characteristics of the potassium channel KCND2. Has no dipeptidyl aminopeptidase activity. The sequence is that of Inactive dipeptidyl peptidase 10 (Dpp10) from Rattus norvegicus (Rat).